Reading from the N-terminus, the 342-residue chain is L-threonine 3-dehydrogenase (342 aa).

Cys-38 is a binding site for Zn(2+). Active-site charge relay system residues include Thr-40 and His-43. Residues His-63, Glu-64, Cys-93, Cys-96, Cys-99, and Cys-107 each contribute to the Zn(2+) site. NAD(+) is bound by residues Ile-175, Asp-195, Arg-200, Leu-262–Ile-264, and Ile-286–Tyr-287.

Belongs to the zinc-containing alcohol dehydrogenase family. In terms of assembly, homotetramer. It depends on Zn(2+) as a cofactor.

The protein resides in the cytoplasm. The catalysed reaction is L-threonine + NAD(+) = (2S)-2-amino-3-oxobutanoate + NADH + H(+). It functions in the pathway amino-acid degradation; L-threonine degradation via oxydo-reductase pathway; glycine from L-threonine: step 1/2. Its function is as follows. Catalyzes the NAD(+)-dependent oxidation of L-threonine to 2-amino-3-ketobutyrate. This Burkholderia cenocepacia (strain ATCC BAA-245 / DSM 16553 / LMG 16656 / NCTC 13227 / J2315 / CF5610) (Burkholderia cepacia (strain J2315)) protein is L-threonine 3-dehydrogenase.